Consider the following 1535-residue polypeptide: Lysine-specific demethylase 5D (1535 aa).

In terms of domain architecture, JmjN spans Cys-14–Pro-55. Positions Thr-79–Ser-169 constitute an ARID domain. The interval Pro-192–Ile-227 is disordered. Residues Leu-197–Ser-210 are compositionally biased toward polar residues. Glycyl lysine isopeptide (Lys-Gly) (interchain with G-Cter in SUMO2) cross-links involve residues Lys-205, Lys-229, Lys-244, and Lys-272. Phosphoserine occurs at positions 291 and 307. The PHD-type 1 zinc-finger motif lies at Ser-314–Ala-364. Residue Tyr-430 coordinates 2-oxoglutarate. Residues Glu-458 to Arg-624 enclose the JmjC domain. Fe cation-binding residues include His-504 and Glu-506. 2-oxoglutarate contacts are provided by Ser-512, Asn-514, and Lys-522. A Fe cation-binding site is contributed by His-592. A C5HC2 zinc finger spans residues Cys-697–Met-749. Phosphoserine is present on Ser-884. The PHD-type 2 zinc finger occupies Ile-1174–Met-1235. At Ser-1342 the chain carries Phosphoserine. The segment at His-1425–Pro-1519 is disordered. Residues Ser-1428–Gln-1441 are compositionally biased toward basic residues. The segment covering Gly-1473–Asn-1487 has biased composition (basic and acidic residues). A compositionally biased stretch (polar residues) spans Leu-1490–Ala-1517.

The protein belongs to the JARID1 histone demethylase family. As to quaternary structure, interacts withPCGF6, MSH5, ZMYND8, AR. L-ascorbate is required as a cofactor. It depends on Fe(2+) as a cofactor.

The protein localises to the nucleus. It carries out the reaction N(6),N(6),N(6)-trimethyl-L-lysyl(4)-[histone H3] + 3 2-oxoglutarate + 3 O2 = L-lysyl(4)-[histone H3] + 3 formaldehyde + 3 succinate + 3 CO2. Histone demethylase that specifically demethylates 'Lys-4' of histone H3, thereby playing a central role in histone code. Does not demethylate histone H3 'Lys-9', H3 'Lys-27', H3 'Lys-36', H3 'Lys-79' or H4 'Lys-20'. Demethylates trimethylated and dimethylated but not monomethylated H3 'Lys-4'. May play a role in spermatogenesis. Involved in transcriptional repression of diverse metastasis-associated genes; in this function seems to cooperate with ZMYND8. Suppresses prostate cancer cell invasion. Regulates androgen receptor (AR) transcriptional activity by demethylating H3K4me3 active transcription marks. The polypeptide is Lysine-specific demethylase 5D (KDM5D) (Pan troglodytes (Chimpanzee)).